A 45-amino-acid polypeptide reads, in one-letter code: Osteocalcin 1 (45 aa).

A Gla domain is found at 1-41 (AAGQLSLTQLESLREVCELNLACEHMMDTEGIIAAYTAYYG). Ca(2+) contacts are provided by E11, E15, E18, and E24. 4-carboxyglutamate occurs at positions 11, 15, and 18. An intrachain disulfide couples C17 to C23.

This sequence belongs to the osteocalcin/matrix Gla protein family. Post-translationally, gamma-carboxyglutamate residues are formed by vitamin K dependent carboxylation by GGCX. These residues are essential for the binding of calcium.

Its subcellular location is the secreted. Functionally, the carboxylated form is one of the main organic components of the bone matrix, which constitutes 1-2% of the total bone protein. The carboxylated form binds strongly to apatite and calcium. This Diplodus sargus (White seabream) protein is Osteocalcin 1.